A 404-amino-acid chain; its full sequence is Protein ARK2N (404 aa).

2 stretches are compositionally biased toward basic and acidic residues: residues 1 to 12 (MKMEEAVGKVEE) and 23 to 32 (SEQETAKEED). 2 disordered regions span residues 1 to 50 (MKME…ADST) and 63 to 255 (RRDS…TNSD). A Phosphoserine modification is found at Ser66. Phosphoserine; by AMPK is present on Ser67. Over residues 87 to 121 (SDSSNHCMLSPSSSGHLADSDTLSSAEENEPSQAE) the composition is skewed to polar residues. Phosphoserine occurs at positions 143, 145, and 147. Positions 169-187 (AKVKGHRSQKHKERIRLLR) are enriched in basic residues. A coiled-coil region spans residues 175–200 (RSQKHKERIRLLRQKREAAARKKYNL). A required for interaction with CSNK2B region spans residues 202–226 (QDSSTSDSDLTCDSSTSSSDDDEEV). The span at 203–219 (DSSTSDSDLTCDSSTSS) shows a compositional bias: low complexity. 3 positions are modified to phosphoserine: Ser327, Ser328, and Ser330. At Arg347 the chain carries Omega-N-methylarginine. Lys358 participates in a covalent cross-link: Glycyl lysine isopeptide (Lys-Gly) (interchain with G-Cter in SUMO2).

In terms of assembly, interacts with CSNK2B (via KSSR). Interacts with JUN; the interaction is mediated by CSNK2B. In terms of processing, phosphorylated at Ser-67 by AMPK. In skeletal muscle, phosphorylation is induced by exercise and seems to increase muscle contractile function. Expressed in skeletal muscle.

Its subcellular location is the nucleus. Functionally, AMPK substrate important for exercise capacity and skeletal muscle function. Required for normal contraction-induced signaling. In terms of biological role, (Microbial infection) Upon Epstein-Barr virus (EBV) infection, suppresses viral BZLF1 expression and subsequent EBV reactivation by interacting with JUN and inhibiting its transcriptional activator activity on BZLF1 Z promoter. This Homo sapiens (Human) protein is Protein ARK2N.